We begin with the raw amino-acid sequence, 446 residues long: Phosphoglucosamine mutase (446 aa).

The active-site Phosphoserine intermediate is S101. S101, D240, D242, and D244 together coordinate Mg(2+). Position 101 is a phosphoserine (S101).

It belongs to the phosphohexose mutase family. The cofactor is Mg(2+). Activated by phosphorylation.

The catalysed reaction is alpha-D-glucosamine 1-phosphate = D-glucosamine 6-phosphate. Its function is as follows. Catalyzes the conversion of glucosamine-6-phosphate to glucosamine-1-phosphate. This chain is Phosphoglucosamine mutase, found in Pseudomonas putida (strain W619).